The primary structure comprises 605 residues: Elongation factor 4 (605 aa).

Residues 9 to 192 (HHIRNFCIIA…AIVKRVPAPS (184 aa)) enclose the tr-type G domain. Residues 21–26 (DHGKST) and 139–142 (NKID) each bind GTP.

The protein belongs to the TRAFAC class translation factor GTPase superfamily. Classic translation factor GTPase family. LepA subfamily.

The protein localises to the cell inner membrane. It catalyses the reaction GTP + H2O = GDP + phosphate + H(+). Required for accurate and efficient protein synthesis under certain stress conditions. May act as a fidelity factor of the translation reaction, by catalyzing a one-codon backward translocation of tRNAs on improperly translocated ribosomes. Back-translocation proceeds from a post-translocation (POST) complex to a pre-translocation (PRE) complex, thus giving elongation factor G a second chance to translocate the tRNAs correctly. Binds to ribosomes in a GTP-dependent manner. This Chlorobium phaeobacteroides (strain DSM 266 / SMG 266 / 2430) protein is Elongation factor 4.